A 79-amino-acid chain; its full sequence is Sec-independent protein translocase protein TatA (79 aa).

A helical transmembrane segment spans residues 1-21 (MGGFTSIWHWVIVLLVIVLLF). The tract at residues 46–79 (DDEEEAKNEPKTLDAQATQTKVHETSEIKSKQES) is disordered. Residues 66-79 (KVHETSEIKSKQES) are compositionally biased toward basic and acidic residues.

Belongs to the TatA/E family. In terms of assembly, the Tat system comprises two distinct complexes: a TatABC complex, containing multiple copies of TatA, TatB and TatC subunits, and a separate TatA complex, containing only TatA subunits. Substrates initially bind to the TatABC complex, which probably triggers association of the separate TatA complex to form the active translocon.

The protein resides in the cell inner membrane. Its function is as follows. Part of the twin-arginine translocation (Tat) system that transports large folded proteins containing a characteristic twin-arginine motif in their signal peptide across membranes. TatA could form the protein-conducting channel of the Tat system. The sequence is that of Sec-independent protein translocase protein TatA from Helicobacter pylori (strain HPAG1).